The following is a 210-amino-acid chain: Large ribosomal subunit protein uL5 (210 aa).

Residues alanine 188–lysine 210 are disordered. Residues alanine 195–lysine 210 are compositionally biased toward basic residues.

Belongs to the universal ribosomal protein uL5 family. In terms of assembly, part of the 50S ribosomal subunit; part of the 5S rRNA/L5/L18/L25 subcomplex. Contacts the 5S rRNA and the P site tRNA. Forms a bridge to the 30S subunit in the 70S ribosome.

Functionally, this is one of the proteins that bind and probably mediate the attachment of the 5S RNA into the large ribosomal subunit, where it forms part of the central protuberance. In the 70S ribosome it contacts protein S13 of the 30S subunit (bridge B1b), connecting the 2 subunits; this bridge is implicated in subunit movement. Contacts the P site tRNA; the 5S rRNA and some of its associated proteins might help stabilize positioning of ribosome-bound tRNAs. This is Large ribosomal subunit protein uL5 from Cutibacterium acnes (strain DSM 16379 / KPA171202) (Propionibacterium acnes).